Reading from the N-terminus, the 184-residue chain is Peptide deformylase 2 (184 aa).

Fe cation is bound by residues Cys-110 and His-153. Glu-154 is an active-site residue. Position 157 (His-157) interacts with Fe cation.

It belongs to the polypeptide deformylase family. Fe(2+) is required as a cofactor.

The catalysed reaction is N-terminal N-formyl-L-methionyl-[peptide] + H2O = N-terminal L-methionyl-[peptide] + formate. Functionally, removes the formyl group from the N-terminal Met of newly synthesized proteins. Requires at least a dipeptide for an efficient rate of reaction. N-terminal L-methionine is a prerequisite for activity but the enzyme has broad specificity at other positions. This chain is Peptide deformylase 2 (defB), found in Bacillus subtilis (strain 168).